We begin with the raw amino-acid sequence, 406 residues long: Succinylornithine transaminase (406 aa).

N6-(pyridoxal phosphate)lysine is present on Lys-252.

The protein belongs to the class-III pyridoxal-phosphate-dependent aminotransferase family. AstC subfamily. The cofactor is pyridoxal 5'-phosphate.

The catalysed reaction is N(2)-succinyl-L-ornithine + 2-oxoglutarate = N-succinyl-L-glutamate 5-semialdehyde + L-glutamate. The protein operates within amino-acid degradation; L-arginine degradation via AST pathway; L-glutamate and succinate from L-arginine: step 3/5. Its function is as follows. Catalyzes the transamination of N(2)-succinylornithine and alpha-ketoglutarate into N(2)-succinylglutamate semialdehyde and glutamate. Can also act as an acetylornithine aminotransferase. The chain is Succinylornithine transaminase from Escherichia coli O17:K52:H18 (strain UMN026 / ExPEC).